Reading from the N-terminus, the 237-residue chain is Corrinoid adenosyltransferase MMAB (237 aa).

Residues 1–26 (MAVWLFGGRLGLRGRLSACRLLCPRF) constitute a mitochondrion transit peptide. The disordered stretch occupies residues 30–49 (GPQGGEDGDRLQPSSTAAKI). ATP is bound by residues 54 to 57 (TKTG), 62 to 63 (SS), and Lys72. At Ser128 the chain carries Phosphoserine. 184 to 188 (RRAER) provides a ligand contact to ATP. Lys205 bears the N6-succinyllysine mark. Asn208 contributes to the ATP binding site. At Lys224 the chain carries N6-acetyllysine; alternate. The residue at position 224 (Lys224) is an N6-succinyllysine; alternate.

This sequence belongs to the Cob(I)alamin adenosyltransferase family. In terms of assembly, homotrimer.

The protein localises to the mitochondrion. It carries out the reaction cob(I)alamin-[corrinoid adenosyltransferase] + ATP = apo-[corrinoid adenosyltransferase] + adenosylcob(III)alamin + triphosphate. In terms of biological role, converts cob(I)alamin to adenosylcobalamin (adenosylcob(III)alamin), a coenzyme for methylmalonyl-CoA mutase, therefore participates in the final step of the vitamin B12 conversion. Generates adenosylcobalamin (AdoCbl) and directly delivers the cofactor to MUT in a transfer that is stimulated by ATP-binding to MMAB and gated by MMAA. This chain is Corrinoid adenosyltransferase MMAB, found in Mus musculus (Mouse).